The primary structure comprises 754 residues: uncharacterized protein (754 aa).

10 consecutive transmembrane segments (helical) span residues 3–23 (ITTV…LPQL), 24–44 (PGTL…FIPV), 50–70 (IALT…ILWA), 223–243 (HLMA…AGLI), 254–274 (WIHW…YAWL), 320–340 (VAIL…LIFW), 370–390 (LLLM…SFIA), 392–412 (LLAI…AMVV), 446–466 (WINI…LLVV), and 471–491 (AWRT…WPLW).

This sequence to B.subtilis ComEC, N.gonorrhoeae ComA, and H.influenzae Rec2.

It is found in the cell membrane. This is an uncharacterized protein from Escherichia coli (strain K12).